Here is a 487-residue protein sequence, read N- to C-terminus: Probable glycine dehydrogenase (decarboxylating) subunit 2 (487 aa).

Lys-273 is modified (N6-(pyridoxal phosphate)lysine).

The protein belongs to the GcvP family. C-terminal subunit subfamily. In terms of assembly, the glycine cleavage system is composed of four proteins: P, T, L and H. In this organism, the P 'protein' is a heterodimer of two subunits. Requires pyridoxal 5'-phosphate as cofactor.

It carries out the reaction N(6)-[(R)-lipoyl]-L-lysyl-[glycine-cleavage complex H protein] + glycine + H(+) = N(6)-[(R)-S(8)-aminomethyldihydrolipoyl]-L-lysyl-[glycine-cleavage complex H protein] + CO2. Functionally, the glycine cleavage system catalyzes the degradation of glycine. The P protein binds the alpha-amino group of glycine through its pyridoxal phosphate cofactor; CO(2) is released and the remaining methylamine moiety is then transferred to the lipoamide cofactor of the H protein. The sequence is that of Probable glycine dehydrogenase (decarboxylating) subunit 2 from Lysinibacillus sphaericus (strain C3-41).